The chain runs to 149 residues: Large ribosomal subunit protein uL15A (149 aa).

Positions 21–40 are disordered; the sequence is RIGKHRKQRGGRGNAGGQHH.

It belongs to the universal ribosomal protein uL15 family. As to quaternary structure, component of the large ribosomal subunit.

The protein resides in the cytoplasm. It is found in the cytosol. The protein localises to the endoplasmic reticulum. Functionally, component of the large ribosomal subunit. The ribosome is a large ribonucleoprotein complex responsible for the synthesis of proteins in the cell. This chain is Large ribosomal subunit protein uL15A (rpl27a-1), found in Entamoeba histolytica (strain ATCC 30459 / HM-1:IMSS / ABRM).